A 335-amino-acid chain; its full sequence is Protein-glutamate methylesterase/protein-glutamine glutaminase 3 (335 aa).

The region spanning 2 to 119 (RIGIVNDMPL…GNPQTAAAPL (118 aa)) is the Response regulatory domain. Aspartate 53 carries the post-translational modification 4-aspartylphosphate. The region spanning 144 to 335 (PKAGGARQRL…IAPRLAEVFD (192 aa)) is the CheB-type methylesterase domain. Residues serine 159, histidine 186, and aspartate 279 contribute to the active site.

Belongs to the CheB family. Post-translationally, phosphorylated by CheA. Phosphorylation of the N-terminal regulatory domain activates the methylesterase activity.

It is found in the cytoplasm. It carries out the reaction [protein]-L-glutamate 5-O-methyl ester + H2O = L-glutamyl-[protein] + methanol + H(+). The catalysed reaction is L-glutaminyl-[protein] + H2O = L-glutamyl-[protein] + NH4(+). Functionally, involved in chemotaxis. Part of a chemotaxis signal transduction system that modulates chemotaxis in response to various stimuli. Catalyzes the demethylation of specific methylglutamate residues introduced into the chemoreceptors (methyl-accepting chemotaxis proteins or MCP) by CheR. Also mediates the irreversible deamidation of specific glutamine residues to glutamic acid. This chain is Protein-glutamate methylesterase/protein-glutamine glutaminase 3, found in Pseudomonas aeruginosa (strain ATCC 15692 / DSM 22644 / CIP 104116 / JCM 14847 / LMG 12228 / 1C / PRS 101 / PAO1).